A 330-amino-acid polypeptide reads, in one-letter code: Aspartate--ammonia ligase (330 aa).

It belongs to the class-II aminoacyl-tRNA synthetase family. AsnA subfamily.

Its subcellular location is the cytoplasm. It carries out the reaction L-aspartate + NH4(+) + ATP = L-asparagine + AMP + diphosphate + H(+). It functions in the pathway amino-acid biosynthesis; L-asparagine biosynthesis; L-asparagine from L-aspartate (ammonia route): step 1/1. This is Aspartate--ammonia ligase from Histophilus somni (strain 2336) (Haemophilus somnus).